Here is a 148-residue protein sequence, read N- to C-terminus: Protein Turandot Z (148 aa).

The first 23 residues, 1–23 (MYFAIRLSFVLAVLFCLTGNGSA), serve as a signal peptide directing secretion.

Belongs to the Turandot family.

The protein resides in the secreted. Its function is as follows. A humoral factor that may play a role in stress tolerance. The chain is Protein Turandot Z from Drosophila sechellia (Fruit fly).